Here is a 206-residue protein sequence, read N- to C-terminus: Small ribosomal subunit protein uS4 (206 aa).

The 63-residue stretch at 96 to 158 (SRLDNVVYRM…AKGQLRIKGA (63 aa)) folds into the S4 RNA-binding domain.

The protein belongs to the universal ribosomal protein uS4 family. As to quaternary structure, part of the 30S ribosomal subunit. Contacts protein S5. The interaction surface between S4 and S5 is involved in control of translational fidelity.

Its function is as follows. One of the primary rRNA binding proteins, it binds directly to 16S rRNA where it nucleates assembly of the body of the 30S subunit. Functionally, with S5 and S12 plays an important role in translational accuracy. The chain is Small ribosomal subunit protein uS4 from Coxiella burnetii (strain CbuK_Q154) (Coxiella burnetii (strain Q154)).